Consider the following 614-residue polypeptide: MNSLRPELLELTPQALTALSNAGFVKRSLKELENGNVPEISHENDALIATFSDGVRTQLANGQALKEAQCSCGANGMCRHRVMLVLSYQRLCATTQSTEKEEEWDPAIWLEELATLPDATRKRAQALVAKGITIELFCAPGEIPSARLPMSDVRFYSRSSIRFARCDCIEGTLCEHVVLAVQAFVEAKAQQAEFNHLIWQMRSEHVTSSDDPFASEEGNACRQYVQQLSQTLWLGGISQPLIHYEAAFNRALQAAETCNWRWVSESLRQLRASVDAFHARASHYNAGECLHQLAALNSRLNCAQEMARRDSIGEVPPVPWRTVVGSGIAGEAKLDHLRLVSLGMRCWQDIEHYGLRIWFTDPDTGSILHLSRSWPRSEQENSPAATRRLFSFQAGALAGGQIVSQAAKRSADGELLLATRNRLSSVVPLSPDAWQMLSAPLRQPGIVALREYLRQRPPACIRPLNQVDNLFILPVAECISLGWDSSRQTLDAQVISGEGEDNVLTLSLPASASAPYAVERMAALLQQTDDPVCLVSGFVSFVEGQLTLEPRVMMTKTRAWALDAETTPVAPLPSASVLPVPSTAHQLLIRCQALLIQLLHNGWRYQEQSAIGQA.

2 consecutive SWIM-type zinc fingers follow at residues 55–89 (VRTQLANGQALKEAQCSCGANGMCRHRVMLVLSYQ) and 151–185 (SDVRFYSRSSIRFARCDCIEGTLCEHVVLAVQAFV).

The sequence is that of Protein YehQ (yehQ) from Escherichia coli (strain K12).